A 1265-amino-acid polypeptide reads, in one-letter code: Nestin (1265 aa).

Residues 1 to 16 (MELLGVRQPFGPQFQE) form a head region. The interval 17–52 (EKYQMLELNHRLESYLGRVKLLEEENKLLREEIHTL) is coil 1A. The IF rod domain maps to 17 to 324 (EKYQMLELNH…ALLDSEGLRI (308 aa)). A linker 1 region spans residues 53-64 (KSSRDPAGQRKA). A coil 1B region spans residues 65–160 (QEEALSQARR…QVHQENMETM (96 aa)). A linker 12 region spans residues 161 to 183 (QASLKQTKQVLMAPQRVQATSIP). Positions 184 to 203 (DLGQEYGYKAAQAWQEAANN) are coil 2A. Positions 204-206 (YQK) are linker 2. The interval 207–324 (QVGRLEESLN…ALLDSEGLRI (118 aa)) is coil 2B. The tail stretch occupies residues 325–1265 (DRPTPNKTSS…EGDSWSSGDE (941 aa)). Residues 383–402 (PSWTLTRGTPQRPPSSTSMT) are compositionally biased toward polar residues. Disordered stretches follow at residues 383–521 (PSWT…TEVS), 667–830 (FEVE…PDME), 863–1073 (HESL…KASQ), 1093–1116 (AQTTHASMDEHSSISPVNENLESS), and 1232–1265 (IRDDKQKDGQPAQSKIVQSDDSADEGDSWSSGDE). Positions 403–418 (EKTEDHISEETKRSAE) are enriched in basic and acidic residues. The segment covering 422-441 (DQLQQEKVQQDWTLESTLPK) has biased composition (polar residues). The span at 444-459 (AEPKPELQPEEIKVED) shows a compositional bias: basic and acidic residues. Polar residues predominate over residues 479 to 496 (LTSVPAEQQGSMSQTPET). Composition is skewed to acidic residues over residues 508–520 (EVSEDGKDEDTEV) and 730–739 (LNEDQSEAEE). 3 stretches are compositionally biased toward basic and acidic residues: residues 784–796 (YKSDEETSHHIGE), 803–819 (EKERIDQGHLNEKRFNT), and 863–897 (HESLDVVVQESERKGNLEKEDSGDADNMRDNKEED). Residues 901–910 (FEQNENQQLT) show a composition bias toward polar residues. Positions 911 to 935 (EHQHVHTEQVEDKPVHSHETQEHVN) are enriched in basic and acidic residues. A compositionally biased stretch (low complexity) spans 943-956 (SERSQQEQLEESSL). The segment covering 1015-1043 (PNASQCFQNTSLLAAATPNEQPLTFTNEV) has biased composition (polar residues). Basic and acidic residues predominate over residues 1061–1070 (SEEKSTDEPK). Composition is skewed to polar residues over residues 1105–1116 (SISPVNENLESS) and 1242–1251 (PAQSKIVQSD). Over residues 1252 to 1265 (DSADEGDSWSSGDE) the composition is skewed to acidic residues.

Belongs to the intermediate filament family. Forms homodimers and homotetramers in vitro. In mixtures with other intermediate filament proteins such as vimentin and alpha-internexin, preferentially forms heterodimers. Widely expressed throughout the developing nervous system at 24 hours post-fertilization (hpf). As development progresses, expression becomes restricted to proliferative zones of the developing and postembryonic central nervous system. In the peripheral nervous system, expressed in the cranial ganglia. Also expressed in mesodermal muscle precursor cells and in cranial mesenchymal tissue.

Its function is as follows. Promotes the disassembly of phosphorylated vimentin intermediate filaments (IF) during mitosis and may play a role in the trafficking and distribution of IF proteins and other cellular factors to daughter cells during progenitor cell division. Required for survival, renewal and mitogen-stimulated proliferation of neural progenitor cells. Required for brain and eye development. The polypeptide is Nestin (nes) (Danio rerio (Zebrafish)).